A 398-amino-acid polypeptide reads, in one-letter code: L-rhamnonate dehydratase (398 aa).

Positions 22 and 48 each coordinate substrate. 3 residues coordinate Mg(2+): aspartate 214, glutamate 241, and glutamate 269. The active-site Proton acceptor is the histidine 319. Glutamate 339 serves as a coordination point for substrate.

Belongs to the mandelate racemase/muconate lactonizing enzyme family. RhamD subfamily. Homooctamer; tetramer of dimers. Mg(2+) serves as cofactor.

The catalysed reaction is L-rhamnonate = 2-dehydro-3-deoxy-L-rhamnonate + H2O. Its function is as follows. Catalyzes the dehydration of L-rhamnonate to 2-keto-3-deoxy-L-rhamnonate (KDR). The protein is L-rhamnonate dehydratase of Verminephrobacter eiseniae (strain EF01-2).